The chain runs to 651 residues: UvrABC system protein B (651 aa).

The region spanning 25 to 178 (RGISCGAKEQ…CQLQERLVEL (154 aa)) is the Helicase ATP-binding domain. An ATP-binding site is contributed by 38 to 45 (GVTGSGKT). Positions 91-114 (YYDYYQPEAYIPQSDVYIEKDALI) match the Beta-hairpin motif. One can recognise a Helicase C-terminal domain in the interval 427–591 (DGQIHDVMCE…IVPRTIQKPV (165 aa)). Residues 593–615 (TSLSERVGSSRKKVSRDTNTDPA) are disordered. Residues 616-651 (NRDIVELQKEMLLCAENLDFERAVEIRNEIKRLTAP) form the UVR domain.

Belongs to the UvrB family. Forms a heterotetramer with UvrA during the search for lesions. Interacts with UvrC in an incision complex.

It is found in the cytoplasm. Its function is as follows. The UvrABC repair system catalyzes the recognition and processing of DNA lesions. A damage recognition complex composed of 2 UvrA and 2 UvrB subunits scans DNA for abnormalities. Upon binding of the UvrA(2)B(2) complex to a putative damaged site, the DNA wraps around one UvrB monomer. DNA wrap is dependent on ATP binding by UvrB and probably causes local melting of the DNA helix, facilitating insertion of UvrB beta-hairpin between the DNA strands. Then UvrB probes one DNA strand for the presence of a lesion. If a lesion is found the UvrA subunits dissociate and the UvrB-DNA preincision complex is formed. This complex is subsequently bound by UvrC and the second UvrB is released. If no lesion is found, the DNA wraps around the other UvrB subunit that will check the other stand for damage. This is UvrABC system protein B from Anaplasma marginale (strain Florida).